The sequence spans 170 residues: Peptide deformylase (170 aa).

Fe cation contacts are provided by Cys91 and His133. Residue Glu134 is part of the active site. His137 contacts Fe cation.

It belongs to the polypeptide deformylase family. Fe(2+) serves as cofactor.

The catalysed reaction is N-terminal N-formyl-L-methionyl-[peptide] + H2O = N-terminal L-methionyl-[peptide] + formate. In terms of biological role, removes the formyl group from the N-terminal Met of newly synthesized proteins. Requires at least a dipeptide for an efficient rate of reaction. N-terminal L-methionine is a prerequisite for activity but the enzyme has broad specificity at other positions. In Glaesserella parasuis serovar 5 (strain SH0165) (Haemophilus parasuis), this protein is Peptide deformylase.